Here is a 242-residue protein sequence, read N- to C-terminus: Type III pantothenate kinase (242 aa).

7–14 (DLGNSRFK) contacts ATP. Substrate contacts are provided by residues Tyr91 and 98-101 (GVDR). The Proton acceptor role is filled by Asp100. Residue Thr121 participates in ATP binding. Thr171 serves as a coordination point for substrate.

It belongs to the type III pantothenate kinase family. Homodimer. The cofactor is NH4(+). K(+) is required as a cofactor.

The protein localises to the cytoplasm. The enzyme catalyses (R)-pantothenate + ATP = (R)-4'-phosphopantothenate + ADP + H(+). It functions in the pathway cofactor biosynthesis; coenzyme A biosynthesis; CoA from (R)-pantothenate: step 1/5. Catalyzes the phosphorylation of pantothenate (Pan), the first step in CoA biosynthesis. In Xylella fastidiosa (strain M23), this protein is Type III pantothenate kinase.